The sequence spans 199 residues: Recombination protein RecR (199 aa).

The C4-type zinc finger occupies 58–73 (CKKCFNLTSEEECEIC). Residues 81–175 (KIICVVAETK…KVTRIAYGLP (95 aa)) form the Toprim domain.

The protein belongs to the RecR family.

In terms of biological role, may play a role in DNA repair. It seems to be involved in an RecBC-independent recombinational process of DNA repair. It may act with RecF and RecO. This is Recombination protein RecR from Prochlorococcus marinus subsp. pastoris (strain CCMP1986 / NIES-2087 / MED4).